Consider the following 240-residue polypeptide: Methylthioribulose-1-phosphate dehydratase (240 aa).

Cysteine 99 lines the substrate pocket. The Zn(2+) site is built by histidine 116 and histidine 118. The active-site Proton donor/acceptor is the glutamate 145. Histidine 201 contacts Zn(2+).

The protein belongs to the aldolase class II family. MtnB subfamily. It depends on Zn(2+) as a cofactor.

Its subcellular location is the cytoplasm. It catalyses the reaction 5-(methylsulfanyl)-D-ribulose 1-phosphate = 5-methylsulfanyl-2,3-dioxopentyl phosphate + H2O. It participates in amino-acid biosynthesis; L-methionine biosynthesis via salvage pathway; L-methionine from S-methyl-5-thio-alpha-D-ribose 1-phosphate: step 2/6. Its function is as follows. Catalyzes the dehydration of methylthioribulose-1-phosphate (MTRu-1-P) into 2,3-diketo-5-methylthiopentyl-1-phosphate (DK-MTP-1-P). In Paracoccidioides lutzii (strain ATCC MYA-826 / Pb01) (Paracoccidioides brasiliensis), this protein is Methylthioribulose-1-phosphate dehydratase.